Reading from the N-terminus, the 473-residue chain is Xylan O-acetyltransferase 14 (473 aa).

The segment covering Met1–Thr17 has biased composition (polar residues). Residues Met1–Gly22 are disordered. Residues Met1–His54 are Cytoplasmic-facing. A helical; Signal-anchor for type II membrane protein membrane pass occupies residues Phe55–Thr75. Residues Lys76–Ser101 are disordered. The Lumenal segment spans residues Lys76–Ser473. 4 disulfide bridges follow: Cys108–Cys159, Cys130–Cys195, Cys139–Cys455, and Cys370–Cys451. The GDS motif signature appears at Gly182 to Ser184. Ser184 serves as the catalytic Nucleophile. Asn209, Asn223, and Asn414 each carry an N-linked (GlcNAc...) asparagine glycan. Asp450 acts as the Proton donor in catalysis. Residues Asp450 to His453 carry the DXXH motif motif. His453 serves as the catalytic Proton acceptor.

The protein belongs to the PC-esterase family. TBL subfamily.

Its subcellular location is the golgi apparatus membrane. In terms of biological role, xylan acetyltransferase required for 2-O- and 3-O-monoacetylation of xylosyl residues in xylan. Catalyzes the 2-O-acetylation of xylan, followed by nonenzymatic acetyl migration to the O-3 position, resulting in products that are monoacetylated at both O-2 and O-3 positions. This chain is Xylan O-acetyltransferase 14, found in Oryza sativa subsp. japonica (Rice).